A 155-amino-acid chain; its full sequence is Deoxyuridine 5'-triphosphate nucleotidohydrolase (155 aa).

Substrate-binding positions include 74 to 76 (RSG), Asn87, and 91 to 93 (TID).

It belongs to the dUTPase family. Requires Mg(2+) as cofactor.

It catalyses the reaction dUTP + H2O = dUMP + diphosphate + H(+). The protein operates within pyrimidine metabolism; dUMP biosynthesis; dUMP from dCTP (dUTP route): step 2/2. Its function is as follows. This enzyme is involved in nucleotide metabolism: it produces dUMP, the immediate precursor of thymidine nucleotides and it decreases the intracellular concentration of dUTP so that uracil cannot be incorporated into DNA. This Cereibacter sphaeroides (strain KD131 / KCTC 12085) (Rhodobacter sphaeroides) protein is Deoxyuridine 5'-triphosphate nucleotidohydrolase.